The chain runs to 225 residues: MSLIEFPLLDQTSSNSVISTTPNDLSNWSRLSSLWPLLYGTSCCFIEFASLIGSRFDFDRYGLVPRSSPRQADLILTAGTVTMKMAPSLVRLYEQMPEPKYVIAMGACTITGGMFSTDSYSTVRGVDKLIPVDVYLPGCPPKPEAVIDALTKLRKKISREIVEDRIRSQNKNRCFTTSHKLYVRRSTHTGTYEQELLYQSPSTLDISSENFYKSKSIVPSYKLVN.

[4Fe-4S] cluster-binding residues include C43, C44, C108, and C139.

It belongs to the complex I 20 kDa subunit family. In terms of assembly, NDH is composed of at least 16 different subunits, 5 of which are encoded in the nucleus. [4Fe-4S] cluster serves as cofactor.

It is found in the plastid. It localises to the chloroplast thylakoid membrane. The enzyme catalyses a plastoquinone + NADH + (n+1) H(+)(in) = a plastoquinol + NAD(+) + n H(+)(out). The catalysed reaction is a plastoquinone + NADPH + (n+1) H(+)(in) = a plastoquinol + NADP(+) + n H(+)(out). Its function is as follows. NDH shuttles electrons from NAD(P)H:plastoquinone, via FMN and iron-sulfur (Fe-S) centers, to quinones in the photosynthetic chain and possibly in a chloroplast respiratory chain. The immediate electron acceptor for the enzyme in this species is believed to be plastoquinone. Couples the redox reaction to proton translocation, and thus conserves the redox energy in a proton gradient. This is NAD(P)H-quinone oxidoreductase subunit K, chloroplastic from Brachypodium distachyon (Purple false brome).